We begin with the raw amino-acid sequence, 215 residues long: Cytochrome b-c1 complex subunit Rieske, mitochondrial (215 aa).

The transit peptide at 1–22 directs the protein to the mitochondrion; the sequence is MLGIRSSVKTCFKPMSLTSKRL. A propeptide spans 23-30 (removed in mature form); that stretch reads ISQSLLAS. Residues 31 to 50 are Mitochondrial matrix-facing; it reads KSTYRTPNFDDVLKENNDAD. Residues 51-80 form a helical membrane-spanning segment; it reads KGRSYAYFMVGAMGLLSSAGAKSTVETFIS. The Mitochondrial intermembrane segment spans residues 81-215; it reads SMTATADVLA…EFDGDKVIVG (135 aa). The tract at residues 90-93 is hinge; the sequence is AMAK. The region spanning 123–214 is the Rieske domain; it reads PHEIQEANSV…YEFDGDKVIV (92 aa). [2Fe-2S] cluster is bound by residues cysteine 159, histidine 161, cysteine 178, and histidine 181. Cysteines 164 and 180 form a disulfide.

The protein belongs to the Rieske iron-sulfur protein family. Component of the ubiquinol-cytochrome c oxidoreductase (cytochrome b-c1 complex, complex III, CIII), a multisubunit enzyme composed of 10 subunits. The complex is composed of 3 respiratory subunits cytochrome b (COB), cytochrome c1 (CYT1) and Rieske protein (RIP1), 2 core protein subunits COR1 and QCR2, and 5 low-molecular weight protein subunits QCR6, QCR7, QCR8, QCR9 and QCR10. The complex exists as an obligatory dimer and forms supercomplexes (SCs) in the inner mitochondrial membrane with a monomer or a dimer of cytochrome c oxidase (complex IV, CIV), resulting in 2 different assemblies (supercomplexes III(2)IV and III(2)IV(2)). RIP1 interacts with QCR10 on the intermembrane space (IMS) side, and with QCR9. The cofactor is [2Fe-2S] cluster. Post-translationally, processed by both the mitochondrial processing peptidase (MPP) and the mitochondrial intermediate protease (MIP). Initially, MPP removes 22 amino acids from the newly imported precursor in the mitochondrial matrix. This proteolytic processing is then followed by a second proteolytic cleavage by MIP, which removes an octapeptide to generate mature-sized RIP1.

Its subcellular location is the mitochondrion inner membrane. It carries out the reaction a quinol + 2 Fe(III)-[cytochrome c](out) = a quinone + 2 Fe(II)-[cytochrome c](out) + 2 H(+)(out). Its function is as follows. Component of the ubiquinol-cytochrome c oxidoreductase, a multisubunit transmembrane complex that is part of the mitochondrial electron transport chain which drives oxidative phosphorylation. The respiratory chain contains 3 multisubunit complexes succinate dehydrogenase (complex II, CII), ubiquinol-cytochrome c oxidoreductase (cytochrome b-c1 complex, complex III, CIII) and cytochrome c oxidase (complex IV, CIV), that cooperate to transfer electrons derived from NADH and succinate to molecular oxygen, creating an electrochemical gradient over the inner membrane that drives transmembrane transport and the ATP synthase. The cytochrome b-c1 complex catalyzes electron transfer from ubiquinol to cytochrome c, linking this redox reaction to translocation of protons across the mitochondrial inner membrane, with protons being carried across the membrane as hydrogens on the quinol. In the process called Q cycle, 2 protons are consumed from the matrix, 4 protons are released into the intermembrane space and 2 electrons are passed to cytochrome c. The Rieske protein is a catalytic core subunit containing a [2Fe-2S] iron-sulfur cluster. It cycles between 2 conformational states during catalysis to transfer electrons from the quinol bound in the Q(0) site in cytochrome b (COB) to cytochrome c1 (CYT1). The polypeptide is Cytochrome b-c1 complex subunit Rieske, mitochondrial (RIP1) (Saccharomyces cerevisiae (strain ATCC 204508 / S288c) (Baker's yeast)).